A 498-amino-acid chain; its full sequence is Isoflavone 2'-hydroxylase (498 aa).

The chain crosses the membrane as a helical span at residues 3–23; sequence ILSYLCYSLFYLSIFFIIRLL. Residue cysteine 436 participates in heme binding.

The protein belongs to the cytochrome P450 family. Requires heme as cofactor. Expressed constitutively in roots, but present at very low levels in uninfected stems and leaves.

The protein resides in the endoplasmic reticulum membrane. The catalysed reaction is formononetin + reduced [NADPH--hemoprotein reductase] + O2 = 2'-hydroxyformononetin + oxidized [NADPH--hemoprotein reductase] + H2O + H(+). Its function is as follows. Involved in the biosynthesis of the pterocarpin phytoalexins. Acts on isoflavones with a 4'-methoxy group on the B-ring, such as formononetin and biochanin A, and on pseudobaptigenin. Has a low activity with daidzein and genistein and no activity with the 7-O-methylated isoflavonoids isoformononetin and prunetin. This is Isoflavone 2'-hydroxylase from Medicago truncatula (Barrel medic).